The primary structure comprises 560 residues: Formate--tetrahydrofolate ligase (560 aa).

ATP is bound at residue 69-76; sequence TPAGEGKS.

It belongs to the formate--tetrahydrofolate ligase family.

The catalysed reaction is (6S)-5,6,7,8-tetrahydrofolate + formate + ATP = (6R)-10-formyltetrahydrofolate + ADP + phosphate. Its pathway is one-carbon metabolism; tetrahydrofolate interconversion. This Listeria welshimeri serovar 6b (strain ATCC 35897 / DSM 20650 / CCUG 15529 / CIP 8149 / NCTC 11857 / SLCC 5334 / V8) protein is Formate--tetrahydrofolate ligase.